Here is a 252-residue protein sequence, read N- to C-terminus: ATP-dependent L-serine kinase (252 aa).

The active site involves Glu-35. Position 73 (Val-73) interacts with O-phospho-L-serine. Asp-74 contributes to the Mg(2+) binding site. O-phospho-L-serine contacts are provided by Gly-75, His-76, His-77, Trp-107, Lys-231, Thr-233, and His-235.

It belongs to the SerK family. Monomer. Mg(2+) is required as a cofactor.

The catalysed reaction is L-serine + ATP = O-phospho-L-serine + ADP + H(+). In terms of biological role, free serine kinase that uses ATP to phosphorylate L-serine to yield O-phospho-L-serine and ADP. Can use ATP, UTP, CTP, GTP and the inorganic polyphosphates triphosphate and tetraphosphate as phosphate donors, with a preference for nucleoside 5'-triphosphates, but cannot use ADP. The catalytic efficiency is highest for ATP. Is specific for L-serine and cannot phosphorylate structurally similar compounds such as D-serine, L-threonine, L-homoserine, hydroxypyruvate, 3-hydroxypropionate and DL-glycerate. Likely contributes to serine metabolism, including cysteine biosynthesis. The protein is ATP-dependent L-serine kinase of Staphylothermus marinus (strain ATCC 43588 / DSM 3639 / JCM 9404 / F1).